The following is a 663-amino-acid chain: DNA ligase (663 aa).

Residues 33–37 (DYSYD), 82–83 (SI), and glutamate 112 each bind NAD(+). Lysine 114 functions as the N6-AMP-lysine intermediate in the catalytic mechanism. The NAD(+) site is built by arginine 135, glutamate 171, lysine 285, and lysine 309. 4 residues coordinate Zn(2+): cysteine 403, cysteine 406, cysteine 419, and cysteine 424. In terms of domain architecture, BRCT spans 581–663 (DKEAPLQGKV…LRILDAKSVS (83 aa)).

It belongs to the NAD-dependent DNA ligase family. LigA subfamily. Mg(2+) serves as cofactor. It depends on Mn(2+) as a cofactor.

It carries out the reaction NAD(+) + (deoxyribonucleotide)n-3'-hydroxyl + 5'-phospho-(deoxyribonucleotide)m = (deoxyribonucleotide)n+m + AMP + beta-nicotinamide D-nucleotide.. DNA ligase that catalyzes the formation of phosphodiester linkages between 5'-phosphoryl and 3'-hydroxyl groups in double-stranded DNA using NAD as a coenzyme and as the energy source for the reaction. It is essential for DNA replication and repair of damaged DNA. The polypeptide is DNA ligase (Chlamydia trachomatis serovar D (strain ATCC VR-885 / DSM 19411 / UW-3/Cx)).